A 391-amino-acid chain; its full sequence is Phosphoglycerate kinase (391 aa).

Substrate-binding positions include 21–23 (DMN), Arg36, 59–62 (HLGR), Arg113, and Arg146. ATP is bound by residues Lys197, Glu319, and 345-348 (GGDT).

This sequence belongs to the phosphoglycerate kinase family. Monomer.

It localises to the cytoplasm. The catalysed reaction is (2R)-3-phosphoglycerate + ATP = (2R)-3-phospho-glyceroyl phosphate + ADP. It participates in carbohydrate degradation; glycolysis; pyruvate from D-glyceraldehyde 3-phosphate: step 2/5. In Chromobacterium violaceum (strain ATCC 12472 / DSM 30191 / JCM 1249 / CCUG 213 / NBRC 12614 / NCIMB 9131 / NCTC 9757 / MK), this protein is Phosphoglycerate kinase.